The chain runs to 653 residues: Epithelial sodium channel subunit gamma (653 aa).

Residues 1–55 (MAPGEKIKAKIKKNLPVKGPQAPTIKELMRWYCLNTNTHGCRRIVVSPGRLRRLL) are Cytoplasmic-facing. The chain crosses the membrane as a helical span at residues 56-76 (WIAFTLTAVGLIFWQCALLVF). Residues 77–538 (SFYTVSVSIK…EMLLSNFGGQ (462 aa)) are Extracellular-facing. 8 disulfides stabilise this stretch: cysteine 100–cysteine 287, cysteine 211–cysteine 218, cysteine 264–cysteine 271, cysteine 376–cysteine 461, cysteine 398–cysteine 457, cysteine 402–cysteine 453, cysteine 411–cysteine 438, and cysteine 413–cysteine 427. Residues 137–225 (RKQRDTESWS…SDCATYTFSS (89 aa)) form a gating release of inhibition by proteolysis (GRIP); protease-sensitive region that is responsible for the proteolytic activation of the channel region. N-linked (GlcNAc...) asparagine glycosylation occurs at asparagine 213. Residue asparagine 275 is glycosylated (N-linked (GlcNAc...) asparagine). The N-linked (GlcNAc...) asparagine glycan is linked to asparagine 501. Residues 539 to 559 (LGLWMSCSVVCVIEIIEVFFI) form a helical membrane-spanning segment. The Cytoplasmic segment spans residues 560–653 (DSLSIVTRRQ…LADTRLPDEP (94 aa)). Residues 582–632 (AAPSAEAPSGAQGQENPALEIDDDLPTFTSALSLPPAPGAQVPGTPPPRYN) are disordered. The PY motif; recruits WW domain-containing proteins and is thereby required for ubiquitination and inhibition of the channel by NEDD4 and NEDD4L signature appears at 627-631 (PPPRY).

This sequence belongs to the amiloride-sensitive sodium channel (TC 1.A.6) family. SCNN1G subfamily. As to quaternary structure, component of the heterotrimeric epithelial sodium channel (ENaC) composed of an alpha/SCNN1A, a beta/SCNN1B and a gamma/SCNN1G subunit. Interacts with WWP1 (via WW domains). Interacts with WWP2 (via WW domains); inhibits the channel. Interacts with the full-length immature form of PCSK9 (pro-PCSK9); inhibits ENaC by promoting its proteasomal degradation. Interacts with BPIFA1; the interaction is indirect via SCNN1B and inhibits the proteolytic maturation of SCNN1A and SCNN1G and the activation of ENaC. Phosphorylated on serine and threonine residues. Aldosterone and insulin increase the basal level of phosphorylation. In terms of processing, ubiquitinated. Can be ubiquitinated at multiple sites and undergo monoubiquitination and polyubiquitination. Ubiquitination by NEDD4 or NEDD4L inhibits the ENaC channel through endocytosis, intracellular retention and degradation of its individual subunits. Post-translationally, ENaC is activated through the proteolytic maturation of its subunits. Furin cleaves the SCNN1G subunit first, followed by cleavage by prostasin (PRSS8), which results in a stepwise increase in the open probability of the channel due to the release of an inhibitory tract. BPIFA1, which is recruited by the SCNN1B subunit, prevents the proteolytic activation of ENaC. N-glycosylated. N-linked glycans are processed to complex type during ENaC complex assembly and transport to the plasma membrane.

It is found in the apical cell membrane. The enzyme catalyses Na(+)(in) = Na(+)(out). With respect to regulation, originally identified and characterized by its inhibition by the diuretic drug amiloride. Its function is as follows. This is one of the three pore-forming subunits of the heterotrimeric epithelial sodium channel (ENaC), a critical regulator of sodium balance and fluid homeostasis. ENaC operates in epithelial tissues, where it mediates the electrodiffusion of sodium ions from extracellular fluid through the apical membrane of cells, with water following osmotically. It plays a key role in maintaining sodium homeostasis through electrogenic sodium reabsorption in the kidneys. Additionally, ENaC is essential for airway surface liquid homeostasis, which is crucial for proper mucus clearance. In Oryctolagus cuniculus (Rabbit), this protein is Epithelial sodium channel subunit gamma.